The following is a 208-amino-acid chain: Probable very-long-chain (3R)-3-hydroxyacyl-CoA dehydratase (208 aa).

Over 1 to 11 the chain is Cytoplasmic; that stretch reads MSKILKIQYLK. The helical transmembrane segment at 12–35 threads the bilayer; that stretch reads LYNVISCFLWMSVLLRTGLIWGIT. At 36–46 the chain is on the lumenal side; it reads KDTAVVFHETN. The chain crosses the membrane as a helical span at residues 47–67; it reads TLVRWVQTLAIAEVFHSIFGL. Over 68–78 the chain is Cytoplasmic; sequence VSSSPLTTIIQ. The chain crosses the membrane as a helical span at residues 79–97; that stretch reads VASRLYLVWGVCYPFSYVI. Residues 98 to 102 are Lumenal-facing; the sequence is EGSPI. Residues 103–123 form a helical membrane-spanning segment; that stretch reads YLSMIIAWSITEIIRYAFYAF. Residues 124–134 are Cytoplasmic-facing; sequence NLNGDIPAFLT. The helical transmembrane segment at 135–157 threads the bilayer; it reads WLRYNTFLILYPIGAGSEFLLVL. Residues Tyr-145 and Glu-152 contribute to the active site. The Lumenal segment spans residues 158–171; it reads KSRIAAQYVWSLNK. The chain crosses the membrane as a helical span at residues 172–192; that stretch reads LLWPILMSIYPPGLYIMYTHM. The Cytoplasmic portion of the chain corresponds to 193–208; sequence LAQRRKISKRAAARRT.

This sequence belongs to the very long-chain fatty acids dehydratase HACD family.

The protein resides in the endoplasmic reticulum membrane. The enzyme catalyses a very-long-chain (3R)-3-hydroxyacyl-CoA = a very-long-chain (2E)-enoyl-CoA + H2O. It functions in the pathway lipid metabolism; fatty acid biosynthesis. Catalyzes the third of the four reactions of the long-chain fatty acids elongation cycle. This endoplasmic reticulum-bound enzymatic process, allows the addition of two carbons to the chain of long- and very long-chain fatty acids/VLCFAs per cycle. This enzyme catalyzes the dehydration of the 3-hydroxyacyl-CoA intermediate into trans-2,3-enoyl-CoA, within each cycle of fatty acid elongation. Thereby, it participates in the production of VLCFAs of different chain lengths that are involved in multiple biological processes as precursors of membrane lipids and lipid mediators. In Schizosaccharomyces pombe (strain 972 / ATCC 24843) (Fission yeast), this protein is Probable very-long-chain (3R)-3-hydroxyacyl-CoA dehydratase.